Consider the following 442-residue polypeptide: Protein translocase subunit SecY (442 aa).

The next 10 helical transmembrane spans lie at leucine 29 to isoleucine 49, isoleucine 69 to isoleucine 89, tyrosine 126 to proline 146, proline 153 to isoleucine 173, isoleucine 182 to leucine 202, isoleucine 217 to valine 237, valine 274 to alanine 294, valine 320 to isoleucine 340, leucine 377 to glutamine 397, and glycine 400 to isoleucine 420.

Belongs to the SecY/SEC61-alpha family. In terms of assembly, component of the Sec protein translocase complex. Heterotrimer consisting of SecY, SecE and SecG subunits. The heterotrimers can form oligomers, although 1 heterotrimer is thought to be able to translocate proteins. Interacts with the ribosome. Interacts with SecDF, and other proteins may be involved. Interacts with SecA.

It localises to the cell inner membrane. It is found in the cellular thylakoid membrane. Functionally, the central subunit of the protein translocation channel SecYEG. Consists of two halves formed by TMs 1-5 and 6-10. These two domains form a lateral gate at the front which open onto the bilayer between TMs 2 and 7, and are clamped together by SecE at the back. The channel is closed by both a pore ring composed of hydrophobic SecY resides and a short helix (helix 2A) on the extracellular side of the membrane which forms a plug. The plug probably moves laterally to allow the channel to open. The ring and the pore may move independently. The protein is Protein translocase subunit SecY of Synechocystis sp. (strain ATCC 27184 / PCC 6803 / Kazusa).